The chain runs to 233 residues: Large ribosomal subunit protein uL1 (233 aa).

Belongs to the universal ribosomal protein uL1 family. Part of the 50S ribosomal subunit.

In terms of biological role, binds directly to 23S rRNA. The L1 stalk is quite mobile in the ribosome, and is involved in E site tRNA release. Functionally, protein L1 is also a translational repressor protein, it controls the translation of the L11 operon by binding to its mRNA. The protein is Large ribosomal subunit protein uL1 of Syntrophotalea carbinolica (strain DSM 2380 / NBRC 103641 / GraBd1) (Pelobacter carbinolicus).